The sequence spans 813 residues: Phenylalanine--tRNA ligase beta subunit (813 aa).

The 110-residue stretch at 42 to 151 folds into the tRNA-binding domain; that stretch reads AKDFNHVVIG…ADAPVGKAYA (110 aa). Residues 405 to 480 form the B5 domain; it reads VKKAPVDITI…RLNGYEHIPE (76 aa). Mg(2+) contacts are provided by aspartate 458, aspartate 464, glutamate 467, and glutamate 468. Residues 720–813 form the FDX-ACB domain; the sequence is SKFPIVERDF…LKKNFDLSVR (94 aa).

This sequence belongs to the phenylalanyl-tRNA synthetase beta subunit family. Type 1 subfamily. Tetramer of two alpha and two beta subunits. Mg(2+) serves as cofactor.

It localises to the cytoplasm. It catalyses the reaction tRNA(Phe) + L-phenylalanine + ATP = L-phenylalanyl-tRNA(Phe) + AMP + diphosphate + H(+). The protein is Phenylalanine--tRNA ligase beta subunit of Bdellovibrio bacteriovorus (strain ATCC 15356 / DSM 50701 / NCIMB 9529 / HD100).